A 261-amino-acid polypeptide reads, in one-letter code: Zinc finger protein 664 (261 aa).

9 consecutive C2H2-type zinc fingers follow at residues 3 to 25 (YKCP…QKIH), 31 to 53 (HKCD…WRDH), 59 to 81 (YKCD…KKIH), 87 to 109 (YKCY…MRVH), 115 to 137 (YVCS…QRVH), 143 to 165 (FKCE…QRVH), 171 to 193 (YKCY…QRVH), 199 to 221 (YRCC…QRVH), and 227 to 249 (FKCD…QRVH). Residue Lys-257 forms a Glycyl lysine isopeptide (Lys-Gly) (interchain with G-Cter in SUMO2) linkage.

Belongs to the krueppel C2H2-type zinc-finger protein family.

Its subcellular location is the nucleus. May be involved in transcriptional regulation. This is Zinc finger protein 664 (ZNF664) from Pongo abelii (Sumatran orangutan).